The chain runs to 376 residues: Queuine tRNA-ribosyltransferase (376 aa).

The Proton acceptor role is filled by aspartate 93. Substrate contacts are provided by residues 93 to 97, aspartate 147, glutamine 190, and glycine 217; that span reads DSGGF. Residues 248-254 are RNA binding; sequence GVGKPDD. Aspartate 267 (nucleophile) is an active-site residue. Zn(2+) contacts are provided by cysteine 305, cysteine 307, cysteine 310, and histidine 336.

Belongs to the queuine tRNA-ribosyltransferase family. Homodimer. Within each dimer, one monomer is responsible for RNA recognition and catalysis, while the other monomer binds to the replacement base PreQ1. Zn(2+) serves as cofactor.

It carries out the reaction 7-aminomethyl-7-carbaguanine + guanosine(34) in tRNA = 7-aminomethyl-7-carbaguanosine(34) in tRNA + guanine. The protein operates within tRNA modification; tRNA-queuosine biosynthesis. In terms of biological role, catalyzes the base-exchange of a guanine (G) residue with the queuine precursor 7-aminomethyl-7-deazaguanine (PreQ1) at position 34 (anticodon wobble position) in tRNAs with GU(N) anticodons (tRNA-Asp, -Asn, -His and -Tyr). Catalysis occurs through a double-displacement mechanism. The nucleophile active site attacks the C1' of nucleotide 34 to detach the guanine base from the RNA, forming a covalent enzyme-RNA intermediate. The proton acceptor active site deprotonates the incoming PreQ1, allowing a nucleophilic attack on the C1' of the ribose to form the product. After dissociation, two additional enzymatic reactions on the tRNA convert PreQ1 to queuine (Q), resulting in the hypermodified nucleoside queuosine (7-(((4,5-cis-dihydroxy-2-cyclopenten-1-yl)amino)methyl)-7-deazaguanosine). The chain is Queuine tRNA-ribosyltransferase from Ruegeria sp. (strain TM1040) (Silicibacter sp.).